The following is a 399-amino-acid chain: Galactokinase (399 aa).

Residue 42–45 coordinates substrate; that stretch reads EHTD. Residues S76 and 133–139 each bind ATP; that span reads ASGLSSS. S139 and E171 together coordinate Mg(2+). The active-site Proton acceptor is D183. Y233 serves as a coordination point for substrate.

The protein belongs to the GHMP kinase family. GalK subfamily.

Its subcellular location is the cytoplasm. The catalysed reaction is alpha-D-galactose + ATP = alpha-D-galactose 1-phosphate + ADP + H(+). Its pathway is carbohydrate metabolism; galactose metabolism. Its function is as follows. Catalyzes the transfer of the gamma-phosphate of ATP to D-galactose to form alpha-D-galactose-1-phosphate (Gal-1-P). The protein is Galactokinase of Lactococcus lactis subsp. cremoris (strain MG1363).